Reading from the N-terminus, the 144-residue chain is L-fucose mutarotase (144 aa).

Residue His22 is the Proton donor of the active site. Residues Asp30, Arg109, and 131–133 (YGN) each bind substrate.

It belongs to the RbsD / FucU family. FucU mutarotase subfamily. Homodecamer.

Its subcellular location is the cytoplasm. The catalysed reaction is alpha-L-fucose = beta-L-fucose. It functions in the pathway carbohydrate metabolism; L-fucose metabolism. Its function is as follows. Involved in the anomeric conversion of L-fucose. The polypeptide is L-fucose mutarotase (Haemophilus influenzae (strain 86-028NP)).